A 76-amino-acid chain; its full sequence is Conotoxin VnMKLT2-013 (76 aa).

The first 23 residues, 1–23, serve as a signal peptide directing secretion; it reads MMKLTCVLIIAVLFLTACQLTTA. Positions 24 to 42 are excised as a propeptide; the sequence is ETRDEYRAVRSSDEVQNSR. Residues 29–49 are disordered; the sequence is YRAVRSSDEVQNSRSTDDCST. Intrachain disulfides connect cysteine 47-cysteine 58, cysteine 52-cysteine 63, and cysteine 57-cysteine 72.

This sequence belongs to the conotoxin O1 superfamily. Expressed by the venom duct.

It is found in the secreted. The chain is Conotoxin VnMKLT2-013 from Conus ventricosus (Mediterranean cone).